The primary structure comprises 262 residues: S-methyl-5'-thioadenosine phosphorylase (262 aa).

Residues Ser-12, 54–55 (RH), and 87–88 (SA) each bind phosphate. Met-185 provides a ligand contact to substrate. Thr-186 is a binding site for phosphate. A substrate-binding site is contributed by 209 to 211 (DYD).

The protein belongs to the PNP/MTAP phosphorylase family. MTAP subfamily. In terms of assembly, homohexamer. Dimer of a homotrimer.

It catalyses the reaction S-methyl-5'-thioadenosine + phosphate = 5-(methylsulfanyl)-alpha-D-ribose 1-phosphate + adenine. It participates in amino-acid biosynthesis; L-methionine biosynthesis via salvage pathway; S-methyl-5-thio-alpha-D-ribose 1-phosphate from S-methyl-5'-thioadenosine (phosphorylase route): step 1/1. Its function is as follows. Catalyzes the reversible phosphorylation of S-methyl-5'-thioadenosine (MTA) to adenine and 5-methylthioribose-1-phosphate. Involved in the breakdown of MTA, a major by-product of polyamine biosynthesis. Responsible for the first step in the methionine salvage pathway after MTA has been generated from S-adenosylmethionine. Has broad substrate specificity with 6-aminopurine nucleosides as preferred substrates. The sequence is that of S-methyl-5'-thioadenosine phosphorylase from Thermofilum pendens (strain DSM 2475 / Hrk 5).